The following is a 228-amino-acid chain: Fluoride-specific ion channel FluC (228 aa).

7 helical membrane passes run 3-23, 37-57, 72-92, 101-121, 141-161, 172-192, and 202-222; these read LSLF…FWVS, GTLF…VMMI, VGFL…LALF, ALNV…GAVL, IFGA…LAFA, LVLV…LVVT, and LWGA…LGLV. Positions 76 and 79 each coordinate Na(+).

The protein belongs to the fluoride channel Fluc/FEX (TC 1.A.43) family.

Its subcellular location is the cell inner membrane. The catalysed reaction is fluoride(in) = fluoride(out). With respect to regulation, na(+) is not transported, but it plays an essential structural role and its presence is essential for fluoride channel function. Its function is as follows. Fluoride-specific ion channel. Important for reducing fluoride concentration in the cell, thus reducing its toxicity. The sequence is that of Fluoride-specific ion channel FluC from Methylococcus capsulatus (strain ATCC 33009 / NCIMB 11132 / Bath).